We begin with the raw amino-acid sequence, 187 residues long: UPF0200 protein MA_4660 (187 aa).

Residue 9 to 16 (GMPASGKS) participates in ATP binding.

Belongs to the UPF0200 family.

The polypeptide is UPF0200 protein MA_4660 (Methanosarcina acetivorans (strain ATCC 35395 / DSM 2834 / JCM 12185 / C2A)).